Reading from the N-terminus, the 395-residue chain is Succinyl-diaminopimelate desuccinylase (395 aa).

A Zn(2+)-binding site is contributed by H81. D83 is a catalytic residue. D114 serves as a coordination point for Zn(2+). The active-site Proton acceptor is the E146. The Zn(2+) site is built by E147, E175, and H364.

Belongs to the peptidase M20A family. DapE subfamily. In terms of assembly, homodimer. Zn(2+) serves as cofactor. The cofactor is Co(2+).

It carries out the reaction N-succinyl-(2S,6S)-2,6-diaminopimelate + H2O = (2S,6S)-2,6-diaminopimelate + succinate. Its pathway is amino-acid biosynthesis; L-lysine biosynthesis via DAP pathway; LL-2,6-diaminopimelate from (S)-tetrahydrodipicolinate (succinylase route): step 3/3. In terms of biological role, catalyzes the hydrolysis of N-succinyl-L,L-diaminopimelic acid (SDAP), forming succinate and LL-2,6-diaminopimelate (DAP), an intermediate involved in the bacterial biosynthesis of lysine and meso-diaminopimelic acid, an essential component of bacterial cell walls. The chain is Succinyl-diaminopimelate desuccinylase from Parvibaculum lavamentivorans (strain DS-1 / DSM 13023 / NCIMB 13966).